Here is a 129-residue protein sequence, read N- to C-terminus: Small ribosomal subunit protein uS11 (129 aa).

This sequence belongs to the universal ribosomal protein uS11 family. As to quaternary structure, part of the 30S ribosomal subunit. Interacts with proteins S7 and S18. Binds to IF-3.

Its function is as follows. Located on the platform of the 30S subunit, it bridges several disparate RNA helices of the 16S rRNA. Forms part of the Shine-Dalgarno cleft in the 70S ribosome. In Caulobacter vibrioides (strain ATCC 19089 / CIP 103742 / CB 15) (Caulobacter crescentus), this protein is Small ribosomal subunit protein uS11.